Reading from the N-terminus, the 33-residue chain is rho operon leader peptide (33 aa).

The span at 1-25 shows a compositional bias: polar residues; it reads MRSEQISGSSLNPSCRFSSAYSPVT. The interval 1–33 is disordered; that stretch reads MRSEQISGSSLNPSCRFSSAYSPVTRQRKDMSR.

The sequence is that of rho operon leader peptide (rhoL) from Escherichia coli O157:H7.